Reading from the N-terminus, the 317-residue chain is 3-oxoacyl-[acyl-carrier-protein] reductase 5, chloroplastic (317 aa).

Residues 1 to 57 (TTVAATKLTSLKATAGKLGYREICQVRQWAPLKSAMPHFGMLRCATSTVVKAQAQAQ) constitute a chloroplast transit peptide. 79–103 (VTGASRGIGKAIALSLGKAGCKVLV) is an NADP(+) binding site. Serine 211 contacts substrate. Tyrosine 224 serves as the catalytic Proton acceptor.

The protein belongs to the short-chain dehydrogenases/reductases (SDR) family. In terms of assembly, homotetramer.

The protein resides in the plastid. Its subcellular location is the chloroplast. The catalysed reaction is a (3R)-hydroxyacyl-[ACP] + NADP(+) = a 3-oxoacyl-[ACP] + NADPH + H(+). Its pathway is lipid metabolism; fatty acid biosynthesis. This Brassica napus (Rape) protein is 3-oxoacyl-[acyl-carrier-protein] reductase 5, chloroplastic (bkr1).